Consider the following 457-residue polypeptide: Chromosomal replication initiator protein DnaA (457 aa).

The interval 1 to 90 (MAVSLWQQCI…RPSAKPQAPA (90 aa)) is domain I, interacts with DnaA modulators. The segment at 79 to 120 (GSRPSAKPQAPAPAAVKAAAPQPKPGNSFVSQPEPAVSNHRS) is disordered. Positions 84-99 (AKPQAPAPAAVKAAAP) are enriched in low complexity. The segment at 91 to 120 (PAAVKAAAPQPKPGNSFVSQPEPAVSNHRS) is domain II. The interval 121–337 (NINPTYQFDN…GALNRVIANA (217 aa)) is domain III, AAA+ region. ATP-binding residues include Gly-165, Gly-167, Lys-168, and Thr-169. The interval 338-457 (NFTGRPITID…YANLIRTLSS (120 aa)) is domain IV, binds dsDNA.

It belongs to the DnaA family. As to quaternary structure, oligomerizes as a right-handed, spiral filament on DNA at oriC.

It is found in the cytoplasm. In terms of biological role, plays an essential role in the initiation and regulation of chromosomal replication. ATP-DnaA binds to the origin of replication (oriC) to initiate formation of the DNA replication initiation complex once per cell cycle. Binds the DnaA box (a 9 base pair repeat at the origin) and separates the double-stranded (ds)DNA. Forms a right-handed helical filament on oriC DNA; dsDNA binds to the exterior of the filament while single-stranded (ss)DNA is stabiized in the filament's interior. The ATP-DnaA-oriC complex binds and stabilizes one strand of the AT-rich DNA unwinding element (DUE), permitting loading of DNA polymerase. After initiation quickly degrades to an ADP-DnaA complex that is not apt for DNA replication. Binds acidic phospholipids. This is Chromosomal replication initiator protein DnaA from Shewanella amazonensis (strain ATCC BAA-1098 / SB2B).